A 377-amino-acid chain; its full sequence is DNA primase small subunit PriS (377 aa).

Active-site residues include aspartate 99, aspartate 101, and aspartate 274.

This sequence belongs to the eukaryotic-type primase small subunit family. As to quaternary structure, heterodimer of a small subunit (PriS) and a large subunit (PriL). The cofactor is Mg(2+). Requires Mn(2+) as cofactor.

In terms of biological role, catalytic subunit of DNA primase, an RNA polymerase that catalyzes the synthesis of short RNA molecules used as primers for DNA polymerase during DNA replication. The small subunit contains the primase catalytic core and has DNA synthesis activity on its own. Binding to the large subunit stabilizes and modulates the activity, increasing the rate of DNA synthesis while decreasing the length of the DNA fragments, and conferring RNA synthesis capability. The DNA polymerase activity may enable DNA primase to also catalyze primer extension after primer synthesis. May also play a role in DNA repair. In Staphylothermus marinus (strain ATCC 43588 / DSM 3639 / JCM 9404 / F1), this protein is DNA primase small subunit PriS.